The chain runs to 104 residues: Pterin-4-alpha-carbinolamine dehydratase (104 aa).

The residue at position 2 (Ala2) is an N-acetylalanine. Substrate is bound by residues 61–63 (DHH) and 78–81 (STHE).

It belongs to the pterin-4-alpha-carbinolamine dehydratase family. In terms of assembly, homotetramer and homodimer. As to expression, the major tissues expressing cDcoH are hypothalamus, kidney and liver.

The protein resides in the cytoplasm. It localises to the nucleus. The catalysed reaction is (4aS,6R)-4a-hydroxy-L-erythro-5,6,7,8-tetrahydrobiopterin = (6R)-L-erythro-6,7-dihydrobiopterin + H2O. In terms of biological role, involved in tetrahydrobiopterin biosynthesis. Seems to both prevent the formation of 7-pterins and accelerate the formation of quinonoid-BH2. Coactivator for HNF1A-dependent transcription. Regulates the dimerization of homeodomain protein HNF1A and enhances its transcriptional activity. Also acts as a coactivator for HNF1B-dependent transcription. The protein is Pterin-4-alpha-carbinolamine dehydratase (PCBD1) of Gallus gallus (Chicken).